An 82-amino-acid polypeptide reads, in one-letter code: RNA-binding protein Hfq (82 aa).

Residues 10-70 (DAFLNQVRKD…ISTVAPLRPI (61 aa)) form the Sm domain.

This sequence belongs to the Hfq family. In terms of assembly, homohexamer.

Its function is as follows. RNA chaperone that binds small regulatory RNA (sRNAs) and mRNAs to facilitate mRNA translational regulation in response to envelope stress, environmental stress and changes in metabolite concentrations. Also binds with high specificity to tRNAs. The protein is RNA-binding protein Hfq of Syntrophomonas wolfei subsp. wolfei (strain DSM 2245B / Goettingen).